We begin with the raw amino-acid sequence, 225 residues long: MPATPQQPSGHTEGLTEPTSEAAMWVVIPCGPCIPIMLGLASLTAFFIITTAVLAERLFRRPQPDPSQRAPTLVWRPGGELWIEPTSSARERSEDWYGSSIPLLMDRAPDPPTPGGTLEGRATAPPAIPTPHPSPSSLVPQTPPEVPAQSTFWRPQTQEESPYATGLVSWVGPEPMAEAGLEVGSPRAWRLRQGSLEPDWSLQPRVTLEQISAFWKREGRTSVGF.

Residues 34 to 54 (IPIMLGLASLTAFFIITTAVL) traverse the membrane as a helical segment. The segment at 107-149 (RAPDPPTPGGTLEGRATAPPAIPTPHPSPSSLVPQTPPEVPAQ) is disordered. T113 and T117 each carry phosphothreonine. Residue S195 is modified to Phosphoserine.

It is found in the membrane. The chain is Transmembrane protein C16orf54 homolog from Rattus norvegicus (Rat).